The sequence spans 350 residues: D-guloside 3-dehydrogenase (350 aa).

It belongs to the zinc-containing alcohol dehydrogenase family. The cofactor is Zn(2+).

It carries out the reaction a D-guloside + NAD(+) = a 3-dehydro-D-guloside + NADH + H(+). Catalyzes the NAD(+)-dependent oxidation of the hydroxyl group at C3 of D-gulosides leading to 3-dehydro-D-gulosides. Probably functions in a metabolic pathway that transforms D-gulosides to D-glucosides. Is also able to catalyze the reverse reactions, i.e. the NADH-dependent reduction of the oxo group at C3 of 3-dehydro-D-gulosides leading to D-gulosides. In vitro, can oxidize D-gulose and methyl beta-D-guloside, and reduce methyl alpha-3-dehydro-D-guloside and methyl beta-3-dehydro-D-guloside. However, the actual specific physiological substrates for this metabolic pathway are unknown. The protein is D-guloside 3-dehydrogenase (ycjQ) of Shigella flexneri.